The following is a 928-amino-acid chain: Probable outer membrane protein pmp10 (928 aa).

The N-terminal stretch at 1 to 25 is a signal peptide; sequence MKSQFSWLVLSSTLACFTSCSTVFA. The Autotransporter domain occupies 635-928; sequence TLCSDRGFWA…NVDLGGKFQF (294 aa).

This sequence belongs to the PMP outer membrane protein family.

The protein resides in the secreted. It is found in the cell wall. Its subcellular location is the cell outer membrane. This is Probable outer membrane protein pmp10 (pmp10) from Chlamydia pneumoniae (Chlamydophila pneumoniae).